The chain runs to 397 residues: Probable protein phosphatase 2C 74 (397 aa).

Residues Gly-133–Leu-391 enclose the PPM-type phosphatase domain. The Mn(2+) site is built by Asp-170, Gly-171, Asp-343, and Asp-382.

This sequence belongs to the PP2C family. It depends on Mg(2+) as a cofactor. Requires Mn(2+) as cofactor.

It catalyses the reaction O-phospho-L-seryl-[protein] + H2O = L-seryl-[protein] + phosphate. It carries out the reaction O-phospho-L-threonyl-[protein] + H2O = L-threonyl-[protein] + phosphate. In Oryza sativa subsp. japonica (Rice), this protein is Probable protein phosphatase 2C 74.